The sequence spans 548 residues: Chaperonin GroEL (548 aa).

ATP is bound by residues Thr-30–Pro-33, Lys-51, Asp-87–Thr-91, Gly-415, and Asn-479–Val-481.

It belongs to the chaperonin (HSP60) family. In terms of assembly, forms a cylinder of 14 subunits composed of two heptameric rings stacked back-to-back. Interacts with the co-chaperonin GroES.

It localises to the cytoplasm. The enzyme catalyses ATP + H2O + a folded polypeptide = ADP + phosphate + an unfolded polypeptide.. Its function is as follows. Together with its co-chaperonin GroES, plays an essential role in assisting protein folding. The GroEL-GroES system forms a nano-cage that allows encapsulation of the non-native substrate proteins and provides a physical environment optimized to promote and accelerate protein folding. The sequence is that of Chaperonin GroEL from Stenotrophomonas maltophilia (Pseudomonas maltophilia).